The following is a 168-amino-acid chain: Phosphopantetheine adenylyltransferase (168 aa).

Threonine 10 provides a ligand contact to substrate. ATP is bound by residues 10–11 (TF) and histidine 18. Substrate contacts are provided by lysine 42, leucine 74, and arginine 88. Residues 89–91 (GLR), glutamate 99, and 124–130 (NSFISST) each bind ATP.

The protein belongs to the bacterial CoaD family. In terms of assembly, homohexamer. It depends on Mg(2+) as a cofactor.

It localises to the cytoplasm. The catalysed reaction is (R)-4'-phosphopantetheine + ATP + H(+) = 3'-dephospho-CoA + diphosphate. Its pathway is cofactor biosynthesis; coenzyme A biosynthesis; CoA from (R)-pantothenate: step 4/5. Reversibly transfers an adenylyl group from ATP to 4'-phosphopantetheine, yielding dephospho-CoA (dPCoA) and pyrophosphate. The chain is Phosphopantetheine adenylyltransferase from Shewanella frigidimarina (strain NCIMB 400).